The chain runs to 425 residues: tRNA(Ile)-lysidine synthase (425 aa).

27–32 provides a ligand contact to ATP; sequence SGGLDS.

It belongs to the tRNA(Ile)-lysidine synthase family.

It localises to the cytoplasm. The catalysed reaction is cytidine(34) in tRNA(Ile2) + L-lysine + ATP = lysidine(34) in tRNA(Ile2) + AMP + diphosphate + H(+). Ligates lysine onto the cytidine present at position 34 of the AUA codon-specific tRNA(Ile) that contains the anticodon CAU, in an ATP-dependent manner. Cytidine is converted to lysidine, thus changing the amino acid specificity of the tRNA from methionine to isoleucine. This chain is tRNA(Ile)-lysidine synthase, found in Streptococcus pneumoniae (strain JJA).